The chain runs to 136 residues: Small ribosomal subunit protein uS9 (136 aa).

The protein belongs to the universal ribosomal protein uS9 family.

This Borreliella burgdorferi (strain ZS7) (Borrelia burgdorferi) protein is Small ribosomal subunit protein uS9.